Consider the following 199-residue polypeptide: MNKTNDIDQLIYLFSKLPGLGIRSARRIVLYLLQDKDVRLKSLINHLIELDKKIVKCEICGNMDTKNICHICSSEHRDKSTIAIVETVAELCAMERSGNFKGLYHVLGHNLSAASRQNPRILRLPELLKRCFVENIKEVIIATNSTLEGQTTAYFIIEYLKEHPAKISRLASGIPIGGELDYLDEGTLSAAINLRQPCE.

A C4-type zinc finger spans residues 57–72; it reads CEICGNMDTKNICHIC. A Toprim domain is found at 80–175; the sequence is STIAIVETVA…KISRLASGIP (96 aa).

This sequence belongs to the RecR family.

Functionally, may play a role in DNA repair. It seems to be involved in an RecBC-independent recombinational process of DNA repair. It may act with RecF and RecO. The protein is Recombination protein RecR of Rickettsia typhi (strain ATCC VR-144 / Wilmington).